The following is a 204-amino-acid chain: Imidazoleglycerol-phosphate dehydratase (204 aa).

It belongs to the imidazoleglycerol-phosphate dehydratase family.

The protein localises to the cytoplasm. It catalyses the reaction D-erythro-1-(imidazol-4-yl)glycerol 3-phosphate = 3-(imidazol-4-yl)-2-oxopropyl phosphate + H2O. Its pathway is amino-acid biosynthesis; L-histidine biosynthesis; L-histidine from 5-phospho-alpha-D-ribose 1-diphosphate: step 6/9. The polypeptide is Imidazoleglycerol-phosphate dehydratase (Corynebacterium jeikeium (strain K411)).